The chain runs to 472 residues: Relaxin-3 receptor 1 (472 aa).

Over 1 to 81 (MQVASATPAA…ESTDTEARVR (81 aa)) the chain is Extracellular. Residues Asn36 and Asn40 are each glycosylated (N-linked (GlcNAc...) asparagine). A helical transmembrane segment spans residues 82-102 (ILISAVYWVVCALGLAGNLLV). Topologically, residues 103-119 (LYLMKSKQGWRKSSINL) are cytoplasmic. A helical transmembrane segment spans residues 120-140 (FVTNLALTDFQFVLTLPFWAV). The Extracellular segment spans residues 141–156 (ENALDFKWPFGKAMCK). A disulfide bridge links Cys155 with Cys247. The chain crosses the membrane as a helical span at residues 157–177 (IVSMVTSMNMYASVFFLTAMS). The Cytoplasmic segment spans residues 178–215 (VARYHSVASALKSHRTRGRGRGDCCGQSLRESCCFSAK). A helical membrane pass occupies residues 216-236 (VLCGLIWASAALASLPNAIFS). At 237-270 (TTIRVLGEELCLMHFPDKLLGWDRQFWLGLYHLQ) the chain is on the extracellular side. The helical transmembrane segment at 271–291 (KVLLGFLLPLSIISLCYLLLV) threads the bilayer. Residues 292–298 (RFISDRR) lie on the Cytoplasmic side of the membrane. The helical transmembrane segment at 299–319 (VVGTTDAVGAAAAPGGGLSTA) threads the bilayer. Over 320-332 (SARRRSKVTKSVT) the chain is Extracellular. The helical transmembrane segment at 333 to 353 (IVVLSFFLCWLPNQALTTWSI) threads the bilayer. Over 354–472 (LIKFNAVPFS…YDLLPSSSAY (119 aa)) the chain is Cytoplasmic.

It belongs to the G-protein coupled receptor 1 family.

The protein resides in the cell membrane. In terms of biological role, receptor for RNL3/relaxin-3. Binding of the ligand inhibit cAMP accumulation. In Mus musculus (Mouse), this protein is Relaxin-3 receptor 1 (Rxfp3).